The sequence spans 122 residues: Histone H2B 1 (122 aa).

Residues 1 to 30 (MPPKPSAKGAKKAAKTVTKPKDGKKRRHAR) are disordered. O-linked (GlcNAc) serine glycosylation occurs at Ser109. A Glycyl lysine isopeptide (Lys-Gly) (interchain with G-Cter in ubiquitin) cross-link involves residue Lys117.

It belongs to the histone H2B family. The nucleosome is a histone octamer containing two molecules each of H2A, H2B, H3 and H4 assembled in one H3-H4 heterotetramer and two H2A-H2B heterodimers. The octamer wraps approximately 147 bp of DNA. Post-translationally, monoubiquitination of Lys-117 gives a specific tag for epigenetic transcriptional activation and is also prerequisite for histone H3 'Lys-4' and 'Lys-79' methylation. In terms of processing, glcNAcylation at Ser-109 promotes monoubiquitination of Lys-117. It fluctuates in response to extracellular glucose, and associates with transcribed genes.

The protein localises to the nucleus. It is found in the chromosome. Functionally, core component of nucleosome. Nucleosomes wrap and compact DNA into chromatin, limiting DNA accessibility to the cellular machineries which require DNA as a template. Histones thereby play a central role in transcription regulation, DNA repair, DNA replication and chromosomal stability. DNA accessibility is regulated via a complex set of post-translational modifications of histones, also called histone code, and nucleosome remodeling. In Caenorhabditis elegans, this protein is Histone H2B 1 (his-11).